The primary structure comprises 243 residues: Protein-L-isoaspartate O-methyltransferase (243 aa).

Serine 87 is an active-site residue.

This sequence belongs to the methyltransferase superfamily. L-isoaspartyl/D-aspartyl protein methyltransferase family.

It is found in the cytoplasm. The enzyme catalyses [protein]-L-isoaspartate + S-adenosyl-L-methionine = [protein]-L-isoaspartate alpha-methyl ester + S-adenosyl-L-homocysteine. Catalyzes the methyl esterification of L-isoaspartyl residues in peptides and proteins that result from spontaneous decomposition of normal L-aspartyl and L-asparaginyl residues. It plays a role in the repair and/or degradation of damaged proteins. In Methanosarcina mazei (strain ATCC BAA-159 / DSM 3647 / Goe1 / Go1 / JCM 11833 / OCM 88) (Methanosarcina frisia), this protein is Protein-L-isoaspartate O-methyltransferase.